The chain runs to 447 residues: UPF0597 protein Amet_4665 (447 aa).

The protein belongs to the UPF0597 family.

This chain is UPF0597 protein Amet_4665, found in Alkaliphilus metalliredigens (strain QYMF).